Consider the following 634-residue polypeptide: UPF0313 protein PG_0934 (634 aa).

Residues 302–582 (AYEMIKHSVN…RQHMFFFWYK (281 aa)) form the Radical SAM core domain. [4Fe-4S] cluster-binding residues include Cys316, Cys320, and Cys323. The interval 607-634 (DRTTSSRNDRHTPPSTQPRKSKSKSRHS) is disordered. The segment covering 625-634 (RKSKSKSRHS) has biased composition (basic residues).

The protein belongs to the UPF0313 family. It depends on [4Fe-4S] cluster as a cofactor.

The polypeptide is UPF0313 protein PG_0934 (Porphyromonas gingivalis (strain ATCC BAA-308 / W83)).